The primary structure comprises 289 residues: Trihelix transcription factor GT-3b (289 aa).

Residues 42-98 form the Myb-like domain; the sequence is WSVEETKELIGIRGELDQTFMETKRNKLLWEVISNKMRDKSFPRSPEQCKCKWKNLV. The Bipartite nuclear localization signal signature appears at 65–81; sequence KRNKLLWEVISNKMRDK. The segment at 137–200 is disordered; the sequence is ESEGGGGGTS…SNSSNSNNGV (64 aa). Residues 156-168 are compositionally biased toward acidic residues; the sequence is SDEEEENVNEELV. The short motif at 179–188 is the Nuclear localization signal element; sequence PKKNIAKKRK. Residues 190 to 199 are compositionally biased toward low complexity; sequence GSNSSNSNNG. Positions 223 to 275 form a coiled coil; that stretch reads EAREKERAEKEEEWRRKMEELEKERLAMERMWRDREEQRRSREEMRAEKRDSL.

In terms of assembly, heterodimer with GT-3A. Associated with the mediator complex.

The protein localises to the nucleus. In terms of biological role, probable transcription factor that may play a role in the induction of CAM4 in response to pathogen and salt. The chain is Trihelix transcription factor GT-3b (GT-3B) from Arabidopsis thaliana (Mouse-ear cress).